We begin with the raw amino-acid sequence, 66 residues long: Toxin BomPI (66 aa).

An LCN-type CS-alpha/beta domain is found at 2-64 (RDAYIAQPEN…VPIRIEGKCH (63 aa)). 4 cysteine pairs are disulfide-bonded: Cys12-Cys63, Cys16-Cys36, Cys22-Cys46, and Cys26-Cys48.

The protein belongs to the long (4 C-C) scorpion toxin superfamily. Sodium channel inhibitor family. Alpha subfamily. As to expression, expressed by the venom gland.

It localises to the secreted. In terms of biological role, alpha toxins bind voltage-independently at site-3 of sodium channels (Nav) and inhibit the inactivation of the activated channels, thereby blocking neuronal transmission. This chain is Toxin BomPI, found in Buthus occitanus mardochei (Moroccan scorpion).